A 120-amino-acid polypeptide reads, in one-letter code: Large ribosomal subunit protein bL12 (120 aa).

Over residues 95-112 (KEGVSKEEAEEVQGKLEE) the composition is skewed to basic and acidic residues. Residues 95-120 (KEGVSKEEAEEVQGKLEEAGASVEVK) are disordered.

It belongs to the bacterial ribosomal protein bL12 family. Homodimer. Part of the ribosomal stalk of the 50S ribosomal subunit. Forms a multimeric L10(L12)X complex, where L10 forms an elongated spine to which 2 to 4 L12 dimers bind in a sequential fashion. Binds GTP-bound translation factors.

Functionally, forms part of the ribosomal stalk which helps the ribosome interact with GTP-bound translation factors. Is thus essential for accurate translation. This chain is Large ribosomal subunit protein bL12, found in Oceanobacillus iheyensis (strain DSM 14371 / CIP 107618 / JCM 11309 / KCTC 3954 / HTE831).